We begin with the raw amino-acid sequence, 387 residues long: Succinate--CoA ligase [ADP-forming] subunit beta (387 aa).

In terms of domain architecture, ATP-grasp spans 9–236 (KELFAKHNVP…RAATDPLELK (228 aa)). ATP contacts are provided by residues lysine 45, 52–54 (GRG), serine 94, and glutamate 99. The Mg(2+) site is built by asparagine 191 and aspartate 205. Residues asparagine 256 and 318 to 320 (GIT) each bind substrate.

Belongs to the succinate/malate CoA ligase beta subunit family. In terms of assembly, heterotetramer of two alpha and two beta subunits. The cofactor is Mg(2+).

The enzyme catalyses succinate + ATP + CoA = succinyl-CoA + ADP + phosphate. It catalyses the reaction GTP + succinate + CoA = succinyl-CoA + GDP + phosphate. It functions in the pathway carbohydrate metabolism; tricarboxylic acid cycle; succinate from succinyl-CoA (ligase route): step 1/1. Its function is as follows. Succinyl-CoA synthetase functions in the citric acid cycle (TCA), coupling the hydrolysis of succinyl-CoA to the synthesis of either ATP or GTP and thus represents the only step of substrate-level phosphorylation in the TCA. The beta subunit provides nucleotide specificity of the enzyme and binds the substrate succinate, while the binding sites for coenzyme A and phosphate are found in the alpha subunit. The chain is Succinate--CoA ligase [ADP-forming] subunit beta from Mycobacterium marinum (strain ATCC BAA-535 / M).